The sequence spans 363 residues: Cyanuric acid amidohydrolase (363 aa).

Residues 1-104 are RU A; it reads MYHIDVFRIP…TVFARRPAID (104 aa). Substrate is bound by residues R52 and 83–84; that span reads SG. The segment at 112 to 249 is RU B; that stretch reads RLTLGIAFTR…NVVIAIGMSE (138 aa). The active site involves K162. Substrate is bound by residues R194 and 232-233; that span reads SA. S232 acts as the Nucleophile in catalysis. Residues 255–363 form an RU C region; that stretch reads LVIAHGVMSD…GGPFAVIARA (109 aa). A Mg(2+)-binding site is contributed by E297. Substrate is bound by residues R324 and 343–344; that span reads SG. 5 residues coordinate Mg(2+): A346, Q349, G350, P351, and G354.

This sequence belongs to the cyclic amide hydrolase (CyAH) family. As to quaternary structure, homotetramer.

The enzyme catalyses cyanurate + H2O = 1-carboxybiuret + H(+). The protein operates within xenobiotic degradation; atrazine degradation; biuret from cyanurate: step 1/1. With respect to regulation, inhibited by barbituric acid. Functionally, responsible for the hydrolysis of cyanuric acid, an intermediate formed during catabolism of s-triazine based compounds in herbicides such as atrazine and polymers such as melamine. Catalyzes the hydrolytic opening of the s-triazine ring of cyanuric acid (2,4,6-trihydroxy-s-triazine) to yield carbon dioxide and carboxybiuret, which spontaneously decarboxylates to biuret. This Pseudomonas sp. (strain ADP) protein is Cyanuric acid amidohydrolase (atzD).